Reading from the N-terminus, the 262-residue chain is Small ribosomal subunit protein eS1z (262 aa).

Residues 1 to 18 (MAVGKNKRISKGRKGGKK) show a composition bias toward basic residues. A disordered region spans residues 1–21 (MAVGKNKRISKGRKGGKKKAV).

Belongs to the eukaryotic ribosomal protein eS1 family. Component of the small ribosomal subunit. Mature ribosomes consist of a small (40S) and a large (60S) subunit. The 40S subunit contains about 33 different proteins and 1 molecule of RNA (18S). The 60S subunit contains about 49 different proteins and 3 molecules of RNA (25S, 5.8S and 5S).

It localises to the cytoplasm. This is Small ribosomal subunit protein eS1z from Arabidopsis thaliana (Mouse-ear cress).